Reading from the N-terminus, the 275-residue chain is 4-deoxy-L-threo-5-hexosulose-uronate ketol-isomerase (275 aa).

Zn(2+) is bound by residues His193, His195, Glu200, and His242.

This sequence belongs to the KduI family. Zn(2+) serves as cofactor.

The catalysed reaction is 5-dehydro-4-deoxy-D-glucuronate = 3-deoxy-D-glycero-2,5-hexodiulosonate. It functions in the pathway glycan metabolism; pectin degradation; 2-dehydro-3-deoxy-D-gluconate from pectin: step 4/5. Its function is as follows. Catalyzes the isomerization of 5-dehydro-4-deoxy-D-glucuronate to 3-deoxy-D-glycero-2,5-hexodiulosonate. This chain is 4-deoxy-L-threo-5-hexosulose-uronate ketol-isomerase, found in Bacillus licheniformis (strain ATCC 14580 / DSM 13 / JCM 2505 / CCUG 7422 / NBRC 12200 / NCIMB 9375 / NCTC 10341 / NRRL NRS-1264 / Gibson 46).